The sequence spans 269 residues: ATP synthase subunit gamma, mitochondrial (269 aa).

F-type ATP synthases have 2 components, the catalytic core F(1) and the membrane-embedded component F(0), linked together by a central stalk and a peripheral stalk. The central stalk, also called rotor shaft, is often seen as part of F(1). The peripheral stalk is seen as part of F(0). F(0) contains the membrane channel next to the rotor. F-type ATP synthases form dimers but each monomer functions independently in ATP generation. The dimer consists of 18 different polypeptides: ATP1 (subunit alpha, part of F(1), 3 molecules per monomer), ATP2 (subunit beta, part of F(1), 3 molecules per monomer), ATP3 (subunit gamma, part of the central stalk), ATP4 (subunit b, part of the peripheral stalk), ATP5/OSCP (subunit 5/OSCP, part of the peripheral stalk), ATP6 (subunit a, part of the peripheral stalk), ATP7 (subunit d, part of the peripheral stalk), ATP8 (subunit 8, part of the peripheral stalk), OLI1 (subunit c, part of the rotor, 10 molecules per monomer), ATP14 (subunit h, part of the peripheral stalk), ATP15 (subunit epsilon, part of the central stalk), ATP16 (subunit delta, part of the central stalk), ATP17 (subunit f, part of the peripheral stalk), ATP18 (subunit i/j, part of the peripheral stalk). Dimer-specific subunits are ATP19 (subunit k, at interface between monomers), ATP20 (subunit g, at interface between monomers), TIM11 (subunit e, at interface between monomers). Also contains subunit L.

It is found in the mitochondrion inner membrane. Functionally, mitochondrial membrane ATP synthase (F(1)F(0) ATP synthase or Complex V) produces ATP from ADP in the presence of a proton gradient across the membrane which is generated by electron transport complexes of the respiratory chain. F-type ATP synthases consist of two structural domains, F(1) - containing the extramembraneous catalytic core, and F(0) - containing the membrane proton channel, linked together by a central stalk and a peripheral stalk. During catalysis, ATP synthesis in the catalytic domain of F(1) is coupled via a rotary mechanism of the central stalk subunits to proton translocation. Part of the complex F(1) domain and the central stalk which is part of the complex rotary element. The gamma/ATP3 subunit protrudes into the catalytic domain formed of alpha/ATP1(3)beta/ATP2(3). Rotation of the central stalk against the surrounding alpha/ATP1(3)beta/ATP2(3) subunits leads to hydrolysis of ATP in three separate catalytic sites on the beta/ATP2 subunits. This Pichia angusta (Yeast) protein is ATP synthase subunit gamma, mitochondrial.